The chain runs to 790 residues: Centrosomal protein of 78 kDa (790 aa).

5 disordered regions span residues 325–345 (YQWV…QRKK), 362–385 (GLAT…YAPN), 428–462 (VTVT…IKEE), 654–732 (AKTG…LNEP), and 756–790 (KTIK…AHLT). A phosphoserine mark is found at S330 and S332. Residues 428–438 (VTVTVESPSSS) show a composition bias toward low complexity. The stretch at 455 to 510 (QKTSIKEETLQEKLEECLRQLKEERVIRLKADKRVSELEHENAQLRNINFSLSEAL) forms a coiled coil. Basic and acidic residues-rich tracts occupy residues 693 to 708 (PSRR…KDLL) and 721 to 732 (GPGDRRSLLNEP).

Belongs to the CEP78 family. As to quaternary structure, interacts with PLK4. Interacts with FAM161A. Interacts with IFT20; regulating IFT20 stability and localization. Interacts with TTC21A; regulating TTC21A stability and localization. Interacts with USP16; promoting USP16-dependent deubiquitination of tektins. Interacts with DCAF1/VPRBP; promoting localization of the EDVP complex to centrosomes. Interacts with CEP350; promoting CEP78 localization to centrosome and centriole. In terms of tissue distribution, expressed by photoreceptor cells in the retina.

It localises to the cytoplasm. Its subcellular location is the cytoskeleton. The protein localises to the microtubule organizing center. The protein resides in the centrosome. It is found in the centriole. It localises to the cilium basal body. Functionally, centriole wall protein that localizes to mature centrioles and regulates centriole and cilia biogenesis. Involved in centrosome duplication: required for efficient PLK4 centrosomal localization and PLK4-induced overduplication of centrioles. Involved in cilium biogenesis and controls cilium length. Acts as a regulator of protein stability by preventing ubiquitination of centrosomal proteins, such as CCP110 and tektins. Associates with the EDVP complex, preventing ubiquitination and degradation of CCP110. Promotes deubiquitination of tektin proteins (TEKT1, TEKT2, TEK3, TEKT4 and TEKT5) via its interaction with USP16. This Mus musculus (Mouse) protein is Centrosomal protein of 78 kDa.